Consider the following 219-residue polypeptide: Large ribosomal subunit protein mL67 (219 aa).

This sequence belongs to the mitochondrion-specific ribosomal protein mL67 family.

It localises to the nucleus. The protein localises to the mitochondrion. In terms of biological role, transcription factor involved in regulation of RNA polymerase II-dependent transcription. Also involved in regulation of mitochondrial DNA recombination, maintenance and repair, and generation of homoplasmic cells. The polypeptide is Large ribosomal subunit protein mL67 (MHR1) (Kluyveromyces lactis (strain ATCC 8585 / CBS 2359 / DSM 70799 / NBRC 1267 / NRRL Y-1140 / WM37) (Yeast)).